The following is a 182-amino-acid chain: Adenine phosphoribosyltransferase (182 aa).

It belongs to the purine/pyrimidine phosphoribosyltransferase family. As to quaternary structure, homodimer.

Its subcellular location is the cytoplasm. It catalyses the reaction AMP + diphosphate = 5-phospho-alpha-D-ribose 1-diphosphate + adenine. The protein operates within purine metabolism; AMP biosynthesis via salvage pathway; AMP from adenine: step 1/1. Its function is as follows. Catalyzes a salvage reaction resulting in the formation of AMP, that is energically less costly than de novo synthesis. The polypeptide is Adenine phosphoribosyltransferase (Bordetella avium (strain 197N)).